The primary structure comprises 425 residues: Kynurenine/alpha-aminoadipate aminotransferase, mitochondrial (425 aa).

Residues 1–29 (MNYSRFLTATSLARKTSPIRATVEIMSRA) constitute a mitochondrion transit peptide. Position 20 (arginine 20) interacts with substrate. Phosphoserine is present on serine 40. Substrate is bound by residues tyrosine 74 and tyrosine 142. Lysine 172 carries the N6-succinyllysine modification. Lysine 179 carries the N6-acetyllysine modification. The span at 179–188 (KPEDSKDPTK) shows a compositional bias: basic and acidic residues. Residues 179–208 (KPEDSKDPTKRTPKFLYTIPNGNNPTGNSL) are disordered. A compositionally biased stretch (polar residues) spans 198–208 (PNGNNPTGNSL). Asparagine 202 lines the substrate pocket. At lysine 263 the chain carries N6-(pyridoxal phosphate)lysine; alternate. N6-acetyllysine; alternate is present on residues lysine 263 and lysine 339. Lysine 263 and lysine 339 each carry N6-succinyllysine; alternate. Lysine 351 is subject to N6-acetyllysine. Position 367 is an N6-acetyllysine; alternate (lysine 367). N6-succinyllysine; alternate is present on lysine 367. Arginine 399 contacts substrate. At lysine 422 the chain carries N6-acetyllysine.

This sequence belongs to the class-I pyridoxal-phosphate-dependent aminotransferase family. Homodimer. Requires pyridoxal 5'-phosphate as cofactor. In terms of processing, the N-terminus is blocked.

It localises to the mitochondrion. It catalyses the reaction L-kynurenine + 2-oxoglutarate = kynurenate + L-glutamate + H2O. The catalysed reaction is L-2-aminoadipate + 2-oxoglutarate = 2-oxoadipate + L-glutamate. The enzyme catalyses glycine + 2-oxoglutarate = glyoxylate + L-glutamate. It carries out the reaction L-kynurenine + glyoxylate = kynurenate + glycine + H2O. It catalyses the reaction 3-hydroxy-L-kynurenine + glyoxylate = xanthurenate + glycine + H2O. The catalysed reaction is 2-oxohexanoate + L-kynurenine = L-2-aminohexanoate + kynurenate + H2O. The enzyme catalyses 3-phenylpyruvate + L-kynurenine = kynurenate + L-phenylalanine + H2O. It carries out the reaction 4-methylsulfanyl-2-oxobutanoate + L-kynurenine = kynurenate + L-methionine + H2O. It catalyses the reaction 2-oxo-3-sulfanylpropanoate + L-kynurenine = kynurenate + L-cysteine + H2O. The catalysed reaction is indole-3-pyruvate + L-kynurenine = kynurenate + L-tryptophan + H2O. The enzyme catalyses 2-oxopentanoate + L-kynurenine = L-2-aminopentanoate + kynurenate + H2O. It carries out the reaction 4-methyl-2-oxopentanoate + L-kynurenine = kynurenate + L-leucine + H2O. It catalyses the reaction glyoxylate + L-methionine = 4-methylsulfanyl-2-oxobutanoate + glycine. The catalysed reaction is L-2-aminoadipate + glyoxylate = 2-oxoadipate + glycine. The enzyme catalyses L-tyrosine + glyoxylate = 3-(4-hydroxyphenyl)pyruvate + glycine. It carries out the reaction glyoxylate + L-phenylalanine = 3-phenylpyruvate + glycine. It catalyses the reaction L-tryptophan + glyoxylate = indole-3-pyruvate + glycine. The catalysed reaction is L-leucine + glyoxylate = 4-methyl-2-oxopentanoate + glycine. The enzyme catalyses 2-oxobutanoate + L-kynurenine = (2S)-2-aminobutanoate + kynurenate + H2O. It carries out the reaction 2-oxoadipate + L-kynurenine = L-2-aminoadipate + kynurenate + H2O. It catalyses the reaction 2-oxoadipate + L-kynurenine = 4-(2-aminophenyl)-2,4-dioxobutanoate + L-2-aminoadipate. The protein operates within amino-acid degradation; L-lysine degradation via saccharopine pathway; glutaryl-CoA from L-lysine: step 4/6. Functionally, transaminase with broad substrate specificity. Has transaminase activity towards aminoadipate, kynurenine, methionine and glutamate. Shows activity also towards tryptophan, aspartate and hydroxykynurenine. Accepts a variety of oxo-acids as amino-group acceptors, with a preference for 2-oxoglutarate, 2-oxocaproic acid, phenylpyruvate and alpha-oxo-gamma-methiol butyric acid. Can also use glyoxylate as amino-group acceptor (in vitro). The polypeptide is Kynurenine/alpha-aminoadipate aminotransferase, mitochondrial (Rattus norvegicus (Rat)).